Here is a 262-residue protein sequence, read N- to C-terminus: Sugar fermentation stimulation protein homolog (262 aa).

Belongs to the SfsA family.

The polypeptide is Sugar fermentation stimulation protein homolog (Lawsonia intracellularis (strain PHE/MN1-00)).